The following is a 72-amino-acid chain: Translation initiation factor IF-1 (72 aa).

Residues 1 to 72 (MSKDDVIEMQ…SRGRITWRAK (72 aa)) enclose the S1-like domain.

Belongs to the IF-1 family. In terms of assembly, component of the 30S ribosomal translation pre-initiation complex which assembles on the 30S ribosome in the order IF-2 and IF-3, IF-1 and N-formylmethionyl-tRNA(fMet); mRNA recruitment can occur at any time during PIC assembly.

Its subcellular location is the cytoplasm. In terms of biological role, one of the essential components for the initiation of protein synthesis. Stabilizes the binding of IF-2 and IF-3 on the 30S subunit to which N-formylmethionyl-tRNA(fMet) subsequently binds. Helps modulate mRNA selection, yielding the 30S pre-initiation complex (PIC). Upon addition of the 50S ribosomal subunit IF-1, IF-2 and IF-3 are released leaving the mature 70S translation initiation complex. The polypeptide is Translation initiation factor IF-1 (Clostridium novyi (strain NT)).